We begin with the raw amino-acid sequence, 286 residues long: L-cysteine S-thiosulfotransferase subunit SoxA (286 aa).

An N-terminal signal peptide occupies residues 1-28 (MKKTIQRGLFTGALVLLTAMTSKPAHAA). An intrachain disulfide couples Cys-106 to Cys-137. Residues 180–286 (DAYMKGKEMF…LKFNGPASRK (107 aa)) enclose the Cytochrome c domain. Positions 200 and 204 each coordinate heme. A substrate-binding site is contributed by Arg-243. Heme is bound at residue Cys-247. The Cysteine persulfide intermediate role is filled by Cys-247.

It belongs to the SoxA family. Heterodimer of SoxA and SoxX. The SoxAX complex interacts with CT1020, SoxAX-binding protein SaxB (SoxK); this interaction stimulates catalytic activity of the complex. The cofactor is heme. Post-translationally, cysteine persulfide at Cys-247.

The protein localises to the periplasm. The catalysed reaction is L-cysteinyl-[SoxY protein] + thiosulfate + 2 Fe(III)-[cytochrome c] = S-sulfosulfanyl-L-cysteinyl-[SoxY protein] + 2 Fe(II)-[cytochrome c] + 2 H(+). It catalyses the reaction S-sulfanyl-L-cysteinyl-[SoxY protein] + thiosulfate + 2 Fe(III)-[cytochrome c] = S-(2-sulfodisulfanyl)-L-cysteinyl-[SoxY protein] + 2 Fe(II)-[cytochrome c] + 2 H(+). Functionally, C-type monoheme cytochrome, which is part of the SoxAX cytochrome complex involved in sulfur oxidation. The SoxAX complex catalyzes the formation of a heterodisulfide bond between the conserved cysteine residue on a sulfur carrier SoxYZ complex subunit SoxY and thiosulfate or other inorganic sulfur substrates. This leads to the liberation of two electrons, which may be transferred from the SoxAX complex to another cytochrome c and which then may be used for reductive CO(2) fixation. This Chlorobaculum thiosulfatiphilum (Chlorobium limicola f.sp. thiosulfatophilum) protein is L-cysteine S-thiosulfotransferase subunit SoxA.